We begin with the raw amino-acid sequence, 206 residues long: Pyridoxine/pyridoxamine 5'-phosphate oxidase (206 aa).

FMN is bound by residues 53–58 (RMVLLK), 68–69 (YT), Lys75, and Gln97. Lys58 serves as a coordination point for substrate. Residues Tyr115, Arg119, and Ser123 each coordinate substrate. Residues 132-133 (QS) and Trp177 each bind FMN. Position 183–185 (183–185 (RLH)) interacts with substrate. Arg187 contributes to the FMN binding site.

Belongs to the pyridoxamine 5'-phosphate oxidase family. In terms of assembly, homodimer. The cofactor is FMN.

It carries out the reaction pyridoxamine 5'-phosphate + O2 + H2O = pyridoxal 5'-phosphate + H2O2 + NH4(+). The catalysed reaction is pyridoxine 5'-phosphate + O2 = pyridoxal 5'-phosphate + H2O2. It functions in the pathway cofactor metabolism; pyridoxal 5'-phosphate salvage; pyridoxal 5'-phosphate from pyridoxamine 5'-phosphate: step 1/1. It participates in cofactor metabolism; pyridoxal 5'-phosphate salvage; pyridoxal 5'-phosphate from pyridoxine 5'-phosphate: step 1/1. Functionally, catalyzes the oxidation of either pyridoxine 5'-phosphate (PNP) or pyridoxamine 5'-phosphate (PMP) into pyridoxal 5'-phosphate (PLP). In Rhizobium etli (strain ATCC 51251 / DSM 11541 / JCM 21823 / NBRC 15573 / CFN 42), this protein is Pyridoxine/pyridoxamine 5'-phosphate oxidase.